The sequence spans 684 residues: Sec1 family domain-containing protein 2 (684 aa).

The protein belongs to the STXBP/unc-18/SEC1 family.

Its function is as follows. May be involved in protein transport. This is Sec1 family domain-containing protein 2 (Scfd2) from Mus musculus (Mouse).